Reading from the N-terminus, the 605-residue chain is Aspartate--tRNA(Asp/Asn) ligase (605 aa).

E176 contacts L-aspartate. An aspartate region spans residues Q200 to K203. 2 residues coordinate L-aspartate: R222 and H452. R222 to E224 serves as a coordination point for ATP. E490 is a binding site for ATP. R497 is an L-aspartate binding site. G542 to R545 contacts ATP.

This sequence belongs to the class-II aminoacyl-tRNA synthetase family. Type 1 subfamily. As to quaternary structure, homodimer.

Its subcellular location is the cytoplasm. It catalyses the reaction tRNA(Asx) + L-aspartate + ATP = L-aspartyl-tRNA(Asx) + AMP + diphosphate. Functionally, aspartyl-tRNA synthetase with relaxed tRNA specificity since it is able to aspartylate not only its cognate tRNA(Asp) but also tRNA(Asn). Reaction proceeds in two steps: L-aspartate is first activated by ATP to form Asp-AMP and then transferred to the acceptor end of tRNA(Asp/Asn). The chain is Aspartate--tRNA(Asp/Asn) ligase from Rickettsia prowazekii (strain Madrid E).